An 838-amino-acid polypeptide reads, in one-letter code: Protein translocase subunit SecA (838 aa).

ATP contacts are provided by residues Gln86, 104-108, and Asp493; that span reads GEGKT. 2 disordered regions span residues 517–536 and 789–838; these read RRID…PGSS and KVAE…CCGQ. A compositionally biased stretch (basic and acidic residues) spans 801-819; the sequence is TDGDSKAKRQPVRKKETVG. Residues Cys824, Cys826, Cys835, and Cys836 each contribute to the Zn(2+) site.

The protein belongs to the SecA family. As to quaternary structure, monomer and homodimer. Part of the essential Sec protein translocation apparatus which comprises SecA, SecYEG and auxiliary proteins SecDF. Other proteins may also be involved. Requires Zn(2+) as cofactor.

It localises to the cell membrane. It is found in the cytoplasm. The enzyme catalyses ATP + H2O + cellular proteinSide 1 = ADP + phosphate + cellular proteinSide 2.. Functionally, part of the Sec protein translocase complex. Interacts with the SecYEG preprotein conducting channel. Has a central role in coupling the hydrolysis of ATP to the transfer of proteins into and across the cell membrane, serving as an ATP-driven molecular motor driving the stepwise translocation of polypeptide chains across the membrane. This is Protein translocase subunit SecA from Halalkalibacterium halodurans (strain ATCC BAA-125 / DSM 18197 / FERM 7344 / JCM 9153 / C-125) (Bacillus halodurans).